The primary structure comprises 602 residues: Sulfite reductase [NADPH] hemoprotein beta-component (602 aa).

Residues 1-15 (MDDHKTASPPRERSY) show a composition bias toward basic and acidic residues. The disordered stretch occupies residues 1–24 (MDDHKTASPPRERSYETPPAERPI). [4Fe-4S] cluster contacts are provided by C458, C464, C503, and C507. Position 507 (C507) interacts with siroheme.

This sequence belongs to the nitrite and sulfite reductase 4Fe-4S domain family. In terms of assembly, alpha(8)-beta(8). The alpha component is a flavoprotein, the beta component is a hemoprotein. The cofactor is siroheme. It depends on [4Fe-4S] cluster as a cofactor.

The enzyme catalyses hydrogen sulfide + 3 NADP(+) + 3 H2O = sulfite + 3 NADPH + 4 H(+). It functions in the pathway sulfur metabolism; hydrogen sulfide biosynthesis; hydrogen sulfide from sulfite (NADPH route): step 1/1. In terms of biological role, component of the sulfite reductase complex that catalyzes the 6-electron reduction of sulfite to sulfide. This is one of several activities required for the biosynthesis of L-cysteine from sulfate. This is Sulfite reductase [NADPH] hemoprotein beta-component from Methylobacterium nodulans (strain LMG 21967 / CNCM I-2342 / ORS 2060).